A 354-amino-acid polypeptide reads, in one-letter code: MTELKNDRYLRALLRQPVDVTPVWMMRQAGRYLPEYKATRAQAGDFMSLCKNAELACEVTLQPLRRYPLDAAILFSDILTVPDAMGLGLYFEAGEGPRFTSPVTCKADVDKLPIPDPEDELGYVMNAVRTIRRELKGEVPLIGFSGSPWTLATYMVEGGSSKAFTVIKKMMYADPQALHALLDKLAKSVTLYLNAQIKAGAQAVMIFDTWGGVLTGRDYQQFSLYYMHKIVDGLLRENDGRRVPVTLFTKGGGQWLEAMAETGCDALGLDWTTDIADARRRVGNKVALQGNMDPSMLYAPPARIEEEVASILAGFGHGEGHVFNLGHGIHQDVPPEHAGVFVEAVHRLSAPYHL.

Residues arginine 27–arginine 31, aspartate 77, tyrosine 154, threonine 209, and histidine 327 contribute to the substrate site.

This sequence belongs to the uroporphyrinogen decarboxylase family. In terms of assembly, homodimer.

It localises to the cytoplasm. It carries out the reaction uroporphyrinogen III + 4 H(+) = coproporphyrinogen III + 4 CO2. The protein operates within porphyrin-containing compound metabolism; protoporphyrin-IX biosynthesis; coproporphyrinogen-III from 5-aminolevulinate: step 4/4. Its function is as follows. Catalyzes the decarboxylation of four acetate groups of uroporphyrinogen-III to yield coproporphyrinogen-III. The polypeptide is Uroporphyrinogen decarboxylase (Escherichia coli O7:K1 (strain IAI39 / ExPEC)).